A 340-amino-acid polypeptide reads, in one-letter code: Glycerol-3-phosphate dehydrogenase [NAD(P)+] (340 aa).

Positions 11, 33, and 110 each coordinate NADPH. Sn-glycerol 3-phosphate-binding residues include K110, G144, and S146. Residue A148 participates in NADPH binding. Positions 199, 252, 262, 263, and 264 each coordinate sn-glycerol 3-phosphate. K199 serves as the catalytic Proton acceptor. NADPH is bound at residue R263. Positions 287 and 289 each coordinate NADPH.

The protein belongs to the NAD-dependent glycerol-3-phosphate dehydrogenase family.

It is found in the cytoplasm. It carries out the reaction sn-glycerol 3-phosphate + NAD(+) = dihydroxyacetone phosphate + NADH + H(+). It catalyses the reaction sn-glycerol 3-phosphate + NADP(+) = dihydroxyacetone phosphate + NADPH + H(+). The protein operates within membrane lipid metabolism; glycerophospholipid metabolism. Its function is as follows. Catalyzes the reduction of the glycolytic intermediate dihydroxyacetone phosphate (DHAP) to sn-glycerol 3-phosphate (G3P), the key precursor for phospholipid synthesis. This Polynucleobacter necessarius subsp. necessarius (strain STIR1) protein is Glycerol-3-phosphate dehydrogenase [NAD(P)+].